We begin with the raw amino-acid sequence, 69 residues long: DNA-directed RNA polymerase subunit omega (69 aa).

It belongs to the RNA polymerase subunit omega family. The RNAP catalytic core consists of 2 alpha, 1 beta, 1 beta' and 1 omega subunit. When a sigma factor is associated with the core the holoenzyme is formed, which can initiate transcription.

The catalysed reaction is RNA(n) + a ribonucleoside 5'-triphosphate = RNA(n+1) + diphosphate. Its function is as follows. Promotes RNA polymerase assembly. Latches the N- and C-terminal regions of the beta' subunit thereby facilitating its interaction with the beta and alpha subunits. The sequence is that of DNA-directed RNA polymerase subunit omega from Pediococcus pentosaceus (strain ATCC 25745 / CCUG 21536 / LMG 10740 / 183-1w).